A 347-amino-acid polypeptide reads, in one-letter code: Pre-B-cell leukemia transcription factor 1 (347 aa).

Residues 1-37 (MDDQPRLMHSHPGVGMAGHPSLSQHMQDGTGANEGDV) are disordered. One can recognise a PBC domain in the interval 38 to 232 (GRKQDIGDIL…VMILRSRFLD (195 aa)). Residues 45 to 124 (DILQQIMTIT…EGVAGPEKGG (80 aa)) are PBC-A. The interval 127 to 232 (AAAAAAAAAS…VMILRSRFLD (106 aa)) is PBC-B. A DNA-binding region (homeobox; TALE-type) is located at residues 233–295 (ARRKRRNFNK…NKRIRYKKNI (63 aa)). Over residues 318–331 (VHGSQANSPSTPSS) the composition is skewed to polar residues. Residues 318–347 (VHGSQANSPSTPSSAGGYPSPCYQSDRRIQ) form a disordered region.

This sequence belongs to the TALE/PBX homeobox family. In terms of assembly, forms a heterodimer with isoform 2 of meis1; the interaction is necessary for neural fate induction. In terms of tissue distribution, shows broad, weak expression from blastula through gastrula stages. At stage 14/15, expressed in a broad arc that gives rise to the forebrain and eyes. More intensely expressed in the lateral neural folds (presumptive neural crest) and as horizontal stripes in the posterior neural plate that give rise to the hindbrain. As development proceeds, expression progresses posteriorly along the neural folds and at stage 21, expression is pronounced in the prospective hindbrain and in migratory neural crest cells. At later stages (stage 26), expression becomes intense within the dorsal portion of the forebrain, and in the optic cup, caudal branchial arch, peripheral to the pronephric anlage, and in the dorsal anterior half of the spinal cord. Expression remains robust in the hindbrain but gradually becomes more restricted. At stage 28, expressed in the dorsal lateral portion of the neural tube and in the somatic layer of the lateral plate mesoderm that surrounds the pronephric anlage.

It is found in the nucleus. In terms of biological role, acts as a transcriptional activator in complex with isoform 2 of meis1, to induce posterior neural and neural crest gene expression, and thereby specify hindbrain and neural crest cell fate. Binds to a highly conserved region in the promoter of the neural crest gene zic3. Required for the nuclear transport or retention of isoform 2 of meis1. This is Pre-B-cell leukemia transcription factor 1 (pbx1) from Xenopus laevis (African clawed frog).